A 1363-amino-acid polypeptide reads, in one-letter code: Xanthine dehydrogenase (1363 aa).

The 2Fe-2S ferredoxin-type domain maps to 35-121 (DTIRFYLNGT…GKHVITVEGI (87 aa)). [2Fe-2S] cluster-binding residues include cysteine 73, cysteine 78, cysteine 81, cysteine 103, cysteine 142, cysteine 145, cysteine 177, and cysteine 179. An FAD-binding PCMH-type domain is found at 266–450 (FGNKRKKWYR…SSLRIPTASE (185 aa)). FAD-binding positions include 294 to 301 (LIGGSTET), phenylalanine 374, 384 to 388 (SPAGN), aspartate 397, and lysine 459. Mo-molybdopterin is bound by residues glutamine 798 and phenylalanine 829. Glutamate 833 and arginine 911 together coordinate substrate. Residue arginine 943 coordinates Mo-molybdopterin. The substrate site is built by phenylalanine 945 and threonine 1041. Position 1110 (alanine 1110) interacts with Mo-molybdopterin. The active-site Proton acceptor is the glutamate 1295.

Belongs to the xanthine dehydrogenase family. The cofactor is FAD. It depends on Mo-molybdopterin as a cofactor. [2Fe-2S] cluster serves as cofactor.

It localises to the peroxisome. It catalyses the reaction xanthine + NAD(+) + H2O = urate + NADH + H(+). The catalysed reaction is hypoxanthine + NAD(+) + H2O = xanthine + NADH + H(+). In terms of biological role, key enzyme in purine degradation. Catalyzes the oxidation of hypoxanthine to xanthine. Catalyzes the oxidation of xanthine to uric acid. In Emericella nidulans (strain FGSC A4 / ATCC 38163 / CBS 112.46 / NRRL 194 / M139) (Aspergillus nidulans), this protein is Xanthine dehydrogenase (hxA).